The primary structure comprises 147 residues: MTSSLKIWGILLALLCILCRLCVYSNNIYWREFIKLHYLSPSREFKEYKCDVLMREKEALKGKSFHMFIYSLWFKIQRACINEKGSDRYRNAYVWAPGALKVLECHWEKYNNRYTESRSFSYIEFHCGVDGYVDNIEDLRIIEPISN.

The signal sequence occupies residues 1–25 (MTSSLKIWGILLALLCILCRLCVYS).

Epididymis, with predominant expression in the corpus region. Moderately expressed in the vas deferens; only low levels are detectable in the caput and cauda regions.

The protein resides in the secreted. In terms of biological role, possible function in sperm maturation. This is Epididymal secretory protein E3-alpha (EDDM3A) from Homo sapiens (Human).